The primary structure comprises 318 residues: Mitochondrial coenzyme A transporter SLC25A42 (318 aa).

Solcar repeat units follow at residues 31 to 117 (RQVL…YKRI), 129 to 214 (LPPW…LKSL), and 224 to 312 (PYPF…MQIL). 6 helical membrane passes run 33 to 53 (VLSSLLSGALAGALAKTAVAP), 89 to 109 (LWRGNSATMVRVIPYAAIQFS), 135 to 155 (LLAGALAGTTAASLTYPLDLV), 186 to 206 (LYFGFTPTVLGVIPYAGLSFF), 230 to 250 (MVFGACAGLIGQSASYPLDVV), and 293 to 313 (LKGPIAVGISFTTFDLMQILL).

This sequence belongs to the mitochondrial carrier (TC 2.A.29) family.

It localises to the mitochondrion inner membrane. The enzyme catalyses ADP(out) + CoA(in) = ADP(in) + CoA(out). The catalysed reaction is 3'-dephospho-CoA(in) + ADP(out) = 3'-dephospho-CoA(out) + ADP(in). It catalyses the reaction adenosine 3',5'-bisphosphate(in) + ADP(out) = adenosine 3',5'-bisphosphate(out) + ADP(in). It carries out the reaction AMP(in) + ADP(out) = AMP(out) + ADP(in). The enzyme catalyses dADP(in) + ADP(out) = dADP(out) + ADP(in). The catalysed reaction is ADP(in) + ATP(out) = ADP(out) + ATP(in). Mitochondrial carrier mediating the transport of coenzyme A (CoA) in mitochondria in exchange for intramitochondrial (deoxy)adenine nucleotides and adenosine 3',5'-diphosphate. In Mus musculus (Mouse), this protein is Mitochondrial coenzyme A transporter SLC25A42 (Slc25a42).